A 780-amino-acid chain; its full sequence is Subtilisin-like protease SBT1.3 (780 aa).

The signal sequence occupies residues 1 to 25; that stretch reads MANKNPLQKPFLFIILSINLIFLQA. Residues 26–120 constitute a propeptide, activation peptide; it reads ETTTQISTKK…VIPETRYELH (95 aa). In terms of domain architecture, Inhibitor I9 spans 36-120; the sequence is TYVIHMDKSA…VIPETRYELH (85 aa). The region spanning 116-628 is the Peptidase S8 domain; that stretch reads RYELHTTRSP…AGHIDPLRAT (513 aa). Aspartate 154 acts as the Charge relay system in catalysis. Residue asparagine 165 is glycosylated (N-linked (GlcNAc...) asparagine). Histidine 227 functions as the Charge relay system in the catalytic mechanism. Residues 384–477 form the PA domain; the sequence is KQYPLVYLGR…GEKEGKLIKQ (94 aa). N-linked (GlcNAc...) asparagine glycosylation is present at asparagine 394. Residue serine 560 is the Charge relay system of the active site. N-linked (GlcNAc...) asparagine glycosylation is found at asparagine 663 and asparagine 731.

Belongs to the peptidase S8 family.

Its subcellular location is the secreted. The polypeptide is Subtilisin-like protease SBT1.3 (Arabidopsis thaliana (Mouse-ear cress)).